Reading from the N-terminus, the 204-residue chain is LexA repressor (204 aa).

A DNA-binding region (H-T-H motif) is located at residues 28-48 (RAEIAQELGFKSPNAAEEHLK). Active-site for autocatalytic cleavage activity residues include Ser125 and Lys162.

It belongs to the peptidase S24 family. As to quaternary structure, homodimer.

It catalyses the reaction Hydrolysis of Ala-|-Gly bond in repressor LexA.. Represses a number of genes involved in the response to DNA damage (SOS response), including recA and lexA. In the presence of single-stranded DNA, RecA interacts with LexA causing an autocatalytic cleavage which disrupts the DNA-binding part of LexA, leading to derepression of the SOS regulon and eventually DNA repair. The sequence is that of LexA repressor from Ectopseudomonas mendocina (strain ymp) (Pseudomonas mendocina).